Consider the following 221-residue polypeptide: Protein myomaker (221 aa).

The Extracellular segment spans residues 1 to 3; that stretch reads MGT. A helical transmembrane segment spans residues 4-24; sequence VVAKLLLPTLSSLAFLPTVSI. The Cytoplasmic portion of the chain corresponds to 25–29; sequence ATKRR. A helical transmembrane segment spans residues 30–50; the sequence is FYMEAMVYLFTMFFVAFSHAC. At 51–64 the chain is on the extracellular side; it reads DGPGLSVLCFMRRD. Residues 65 to 85 form a helical membrane-spanning segment; that stretch reads ILEYFSIYGTALSMWVSLMAL. Residues 86 to 93 lie on the Cytoplasmic side of the membrane; it reads ADFDEPQR. A helical transmembrane segment spans residues 94–110; that stretch reads STFTMLGVLTIAVRTFH. The Extracellular segment spans residues 111 to 113; the sequence is DRW. The helical transmembrane segment at 114-134 threads the bilayer; it reads GYGVYSGPIGTATLIIAVKWL. Residues 135–153 are Cytoplasmic-facing; it reads KKMKEKKGLYPDKSIYTQQ. Residues 154–174 traverse the membrane as a helical segment; it reads IGPGLCFGALALMLRFFFEEW. Position 175 (D175) is a topological domain, extracellular. A helical membrane pass occupies residues 176–196; that stretch reads YTYVHSFYHCALAMSFVLLLP. Topologically, residues 197-221 are cytoplasmic; that stretch reads KVNKKAGNAGAPAKLTFSTLCCTCV. Residues C217 and C218 are each lipidated (S-palmitoyl cysteine).

It belongs to the TMEM8 family. In terms of assembly, interacts with MYMX. Palmitoylated at the C-terminus; palmitoylation promotes localization to the Golgi apparatus. In terms of tissue distribution, specifically expressed in skeletal muscle during embryogenesis and adult muscle regeneration.

The protein localises to the cell membrane. Its subcellular location is the golgi apparatus membrane. In terms of biological role, myoblast-specific protein that mediates myoblast fusion, an essential step for the formation of multi-nucleated muscle fibers. Actively participates in the membrane fusion reaction by mediating the mixing of cell membrane lipids (hemifusion) upstream of MYMX. Acts independently of MYMX. Involved in skeletal muscle regeneration in response to injury by mediating the fusion of satellite cells, a population of muscle stem cells, with injured myofibers. Also involved in skeletal muscle hypertrophy, probably by mediating the fusion of satellite cells with myofibers. This is Protein myomaker from Mus musculus (Mouse).